The chain runs to 454 residues: Probable ECA polymerase (454 aa).

11 helical membrane passes run 3 to 23, 39 to 59, 61 to 81, 119 to 139, 154 to 174, 180 to 200, 201 to 221, 222 to 242, 340 to 360, 377 to 397, and 409 to 429; these read LGQF…ILTL, FSML…MLVF, FGVA…ATAF, LALV…FLLF, GVAL…VYFL, AWFF…VIVG, GTRA…IVRG, WITL…MFWL, LVVM…GLII, YKAA…IVLA, and VFFC…YWLF.

Belongs to the WzyE family. Probably part of a complex composed of WzxE, WzyE and WzzE.

The protein resides in the cell inner membrane. The protein operates within bacterial outer membrane biogenesis; enterobacterial common antigen biosynthesis. Probably involved in the polymerization of enterobacterial common antigen (ECA) trisaccharide repeat units. The sequence is that of Probable ECA polymerase from Yersinia pestis bv. Antiqua (strain Angola).